Here is a 164-residue protein sequence, read N- to C-terminus: NADH-quinone oxidoreductase subunit I (164 aa).

4Fe-4S ferredoxin-type domains lie at 55 to 85 (LRRYPNGEERCIACKLCEAICPAQAITIDAE) and 95 to 124 (TRYDIDMTKCIYCGFCQEACPVDAIVEGPN). 8 residues coordinate [4Fe-4S] cluster: Cys-65, Cys-68, Cys-71, Cys-75, Cys-104, Cys-107, Cys-110, and Cys-114.

The protein belongs to the complex I 23 kDa subunit family. As to quaternary structure, NDH-1 is composed of 14 different subunits. Subunits NuoA, H, J, K, L, M, N constitute the membrane sector of the complex. It depends on [4Fe-4S] cluster as a cofactor.

The protein localises to the cell inner membrane. It catalyses the reaction a quinone + NADH + 5 H(+)(in) = a quinol + NAD(+) + 4 H(+)(out). NDH-1 shuttles electrons from NADH, via FMN and iron-sulfur (Fe-S) centers, to quinones in the respiratory chain. The immediate electron acceptor for the enzyme in this species is believed to be ubiquinone. Couples the redox reaction to proton translocation (for every two electrons transferred, four hydrogen ions are translocated across the cytoplasmic membrane), and thus conserves the redox energy in a proton gradient. The chain is NADH-quinone oxidoreductase subunit I from Ruegeria pomeroyi (strain ATCC 700808 / DSM 15171 / DSS-3) (Silicibacter pomeroyi).